The chain runs to 97 residues: Aspartyl/glutamyl-tRNA(Asn/Gln) amidotransferase subunit C (97 aa).

It belongs to the GatC family. Heterotrimer of A, B and C subunits.

It catalyses the reaction L-glutamyl-tRNA(Gln) + L-glutamine + ATP + H2O = L-glutaminyl-tRNA(Gln) + L-glutamate + ADP + phosphate + H(+). It carries out the reaction L-aspartyl-tRNA(Asn) + L-glutamine + ATP + H2O = L-asparaginyl-tRNA(Asn) + L-glutamate + ADP + phosphate + 2 H(+). Allows the formation of correctly charged Asn-tRNA(Asn) or Gln-tRNA(Gln) through the transamidation of misacylated Asp-tRNA(Asn) or Glu-tRNA(Gln) in organisms which lack either or both of asparaginyl-tRNA or glutaminyl-tRNA synthetases. The reaction takes place in the presence of glutamine and ATP through an activated phospho-Asp-tRNA(Asn) or phospho-Glu-tRNA(Gln). This Synechococcus sp. (strain CC9311) protein is Aspartyl/glutamyl-tRNA(Asn/Gln) amidotransferase subunit C.